We begin with the raw amino-acid sequence, 367 residues long: Probable sugar phosphate/phosphate translocator At1g48230 (367 aa).

Transmembrane regions (helical) follow at residues 9-29 (LVLTYIYLLIYIILSSGVILY), 43-63 (LPITLTMIHMGFSGFVAFLLI), 76-96 (FEIYVTCVVPISAFFASSLWF), 106-126 (VAFIQMLKALMPVATFLMAVV), 140-160 (MVLVSVGVVVSSYGEINFNVI), 163-183 (VYQVMGIFAEALRLVLTQVLL), 193-213 (VTSLYYIAPCSFVFLSLPWYV), 229-249 (WIFFSNALCALALNFSIFLVI), 257-276 (IRVAGVLKDWILIALSTVIF), and 280-302 (TITGLNITGYAIALCGVVMYNYI). Positions 321–330 (ITKDWKEKNS) are enriched in basic and acidic residues. A disordered region spans residues 321-341 (ITKDWKEKNSSDGGSPRGLEL).

This sequence belongs to the TPT transporter family. TPT (TC 2.A.7.9) subfamily.

The protein resides in the membrane. This Arabidopsis thaliana (Mouse-ear cress) protein is Probable sugar phosphate/phosphate translocator At1g48230.